Reading from the N-terminus, the 160-residue chain is Anaerobic nitrite reductase AHB1 (160 aa).

One can recognise a Globin domain in the interval 8-157; that stretch reads VFTEEQEALV…LVAAIKAEMN (150 aa). The Homodimerization motif lies at 41–45; sequence EIAPT. Residues S51, K65, H69, R99, S103, and H104 each coordinate heme b. The short motif at 111-123 is the Homodimerization element; that stretch reads DEHFEVAKYALLE.

The protein belongs to the plant globin family. In terms of assembly, homodimer. The cofactor is heme b. As to expression, expressed in roots and rosette leaves.

It localises to the cytoplasm. Its subcellular location is the nucleus. It catalyses the reaction Fe(III)-heme b-[protein] + nitric oxide + H2O = Fe(II)-heme b-[protein] + nitrite + 2 H(+). Functionally, phytoglobin that reduces nitrite to nitric oxide (NO) under anoxic conditions (e.g. during flooding or in waterlogged soil). May not function as an oxygen storage or transport protein. Has an unusually high affinity for O(2) through an hexacoordinate heme iron because of a very low dissociation constant. The polypeptide is Anaerobic nitrite reductase AHB1 (Arabidopsis thaliana (Mouse-ear cress)).